Reading from the N-terminus, the 758-residue chain is Xaa-Pro dipeptidyl-peptidase (758 aa).

Residues Ser-349, Asp-469, and His-499 each act as charge relay system in the active site.

This sequence belongs to the peptidase S15 family. As to quaternary structure, homodimer.

The protein localises to the cytoplasm. The catalysed reaction is Hydrolyzes Xaa-Pro-|- bonds to release unblocked, N-terminal dipeptides from substrates including Ala-Pro-|-p-nitroanilide and (sequentially) Tyr-Pro-|-Phe-Pro-|-Gly-Pro-|-Ile.. In terms of biological role, removes N-terminal dipeptides sequentially from polypeptides having unsubstituted N-termini provided that the penultimate residue is proline. In Streptococcus uberis (strain ATCC BAA-854 / 0140J), this protein is Xaa-Pro dipeptidyl-peptidase.